The chain runs to 178 residues: Protein GrpE (178 aa).

This sequence belongs to the GrpE family. Homodimer.

The protein localises to the cytoplasm. In terms of biological role, participates actively in the response to hyperosmotic and heat shock by preventing the aggregation of stress-denatured proteins, in association with DnaK and GrpE. It is the nucleotide exchange factor for DnaK and may function as a thermosensor. Unfolded proteins bind initially to DnaJ; upon interaction with the DnaJ-bound protein, DnaK hydrolyzes its bound ATP, resulting in the formation of a stable complex. GrpE releases ADP from DnaK; ATP binding to DnaK triggers the release of the substrate protein, thus completing the reaction cycle. Several rounds of ATP-dependent interactions between DnaJ, DnaK and GrpE are required for fully efficient folding. This is Protein GrpE from Rickettsia prowazekii (strain Madrid E).